A 422-amino-acid polypeptide reads, in one-letter code: 5'-deoxyadenosine deaminase (422 aa).

The Zn(2+) site is built by His-57 and His-59. The substrate site is built by Glu-86 and His-178. His-205 serves as a coordination point for Zn(2+). The substrate site is built by Glu-208 and Asp-294. Asp-294 provides a ligand contact to Zn(2+).

This sequence belongs to the metallo-dependent hydrolases superfamily. MTA/SAH deaminase family. As to quaternary structure, homotetramer. Zn(2+) serves as cofactor.

The catalysed reaction is 5'-deoxyadenosine + H2O + H(+) = 5'-deoxyinosine + NH4(+). It catalyses the reaction S-adenosyl-L-homocysteine + H2O + H(+) = S-inosyl-L-homocysteine + NH4(+). It carries out the reaction S-methyl-5'-thioadenosine + H2O + H(+) = S-methyl-5'-thioinosine + NH4(+). The enzyme catalyses adenosine + H2O + H(+) = inosine + NH4(+). It functions in the pathway amino-acid biosynthesis; S-adenosyl-L-methionine biosynthesis. Its function is as follows. Catalyzes the deamination of three SAM-derived enzymatic products, namely 5'-deoxyadenosine, S-adenosyl-L-homocysteine, and 5'-methylthioadenosine, to produce the inosine analogs. Can also deaminate adenosine. The preferred substrate for this enzyme is 5'-deoxyadenosine, but all these substrates are efficiently deaminated. Likely functions in a S-adenosyl-L-methionine (SAM) recycling pathway from S-adenosyl-L-homocysteine (SAH) produced from SAM-dependent methylation reactions. May also be involved in the recycling of 5'-deoxyadenosine, whereupon the 5'-deoxyribose moiety of 5'-deoxyinosine is further metabolized to deoxyhexoses used for the biosynthesis of aromatic amino acids in methanogens. This chain is 5'-deoxyadenosine deaminase, found in Methanococcus maripaludis (strain C5 / ATCC BAA-1333).